The sequence spans 781 residues: Tax1-binding protein 1 homolog A (781 aa).

2 coiled-coil regions span residues 148 to 453 (NSDI…QGDA) and 488 to 581 (DVEK…YMRE). The segment covering 441–465 (KLTQQQETQQGDANRNDASTETTLE) has biased composition (polar residues). 2 disordered regions span residues 441–510 (KLTQ…EEEC) and 630–691 (ETRD…EAPA). Residues 484-495 (TVARDVEKSRDE) are compositionally biased toward basic and acidic residues. Positions 496-510 (EGNEQEEEDEEEEEC) are enriched in acidic residues. Residues 646–656 (RPPPLAPPPWG) show a composition bias toward pro residues. UBZ1-type zinc fingers lie at residues 716–742 (HKQC…VESH) and 743–769 (WRVC…VHTH). 8 residues coordinate Zn(2+): Cys-719, Cys-722, His-738, His-742, Cys-746, Cys-749, His-765, and His-769.

As to expression, little expression is observed during pectoral fin development, except for an elevated level of expression in the distal mesenchyme cells of some samples.

Functionally, may have anti-apoptotic activity. This is Tax1-binding protein 1 homolog A from Danio rerio (Zebrafish).